An 860-amino-acid polypeptide reads, in one-letter code: Leucine--tRNA ligase (860 aa).

The short motif at 42–52 (PYPSGRLHMGH) is the 'HIGH' region element. A 'KMSKS' region motif is present at residues 619-623 (KMSKS). Lys-622 contacts ATP.

This sequence belongs to the class-I aminoacyl-tRNA synthetase family.

It localises to the cytoplasm. It catalyses the reaction tRNA(Leu) + L-leucine + ATP = L-leucyl-tRNA(Leu) + AMP + diphosphate. This chain is Leucine--tRNA ligase, found in Escherichia coli O81 (strain ED1a).